We begin with the raw amino-acid sequence, 287 residues long: 4-diphosphocytidyl-2-C-methyl-D-erythritol kinase (287 aa).

Lys11 is a catalytic residue. 93 to 103 provides a ligand contact to ATP; it reads PFGAGLGGGSS. Asp135 is an active-site residue.

The protein belongs to the GHMP kinase family. IspE subfamily.

The catalysed reaction is 4-CDP-2-C-methyl-D-erythritol + ATP = 4-CDP-2-C-methyl-D-erythritol 2-phosphate + ADP + H(+). It functions in the pathway isoprenoid biosynthesis; isopentenyl diphosphate biosynthesis via DXP pathway; isopentenyl diphosphate from 1-deoxy-D-xylulose 5-phosphate: step 3/6. Its function is as follows. Catalyzes the phosphorylation of the position 2 hydroxy group of 4-diphosphocytidyl-2C-methyl-D-erythritol. This is 4-diphosphocytidyl-2-C-methyl-D-erythritol kinase from Chlorobium luteolum (strain DSM 273 / BCRC 81028 / 2530) (Pelodictyon luteolum).